A 307-amino-acid chain; its full sequence is Ribonuclease Z (307 aa).

Zn(2+) is bound by residues His61, His63, Asp65, His66, His138, Asp208, and His264. Catalysis depends on Asp65, which acts as the Proton acceptor.

Belongs to the RNase Z family. In terms of assembly, homodimer. Requires Zn(2+) as cofactor.

The catalysed reaction is Endonucleolytic cleavage of RNA, removing extra 3' nucleotides from tRNA precursor, generating 3' termini of tRNAs. A 3'-hydroxy group is left at the tRNA terminus and a 5'-phosphoryl group is left at the trailer molecule.. Functionally, zinc phosphodiesterase, which displays some tRNA 3'-processing endonuclease activity. Probably involved in tRNA maturation, by removing a 3'-trailer from precursor tRNA. This chain is Ribonuclease Z, found in Pyrococcus horikoshii (strain ATCC 700860 / DSM 12428 / JCM 9974 / NBRC 100139 / OT-3).